Here is a 127-residue protein sequence, read N- to C-terminus: Probable soluble cytochrome b562 1 (127 aa).

The N-terminal stretch at 1 to 21 (MRKIPIIAGVFSLLITSCTFA) is a signal peptide. Heme b contacts are provided by Met28 and His123.

Belongs to the cytochrome b562 family. Requires heme b as cofactor.

It is found in the periplasm. Functionally, electron-transport protein of unknown function. This is Probable soluble cytochrome b562 1 (cybC1) from Yersinia pestis.